A 160-amino-acid chain; its full sequence is uncharacterized protein (160 aa).

It localises to the mitochondrion. This is an uncharacterized protein from Arabidopsis thaliana (Mouse-ear cress).